A 304-amino-acid chain; its full sequence is Protoheme IX farnesyltransferase (304 aa).

The next 9 helical transmembrane spans lie at 32 to 52, 54 to 74, 104 to 124, 126 to 146, 154 to 174, 180 to 200, 226 to 246, 247 to 267, and 284 to 304; these read VVAL…PGSV, LQPL…AAAF, ALTF…TLVN, LTAW…TAYL, IVVG…SVTG, ALLL…ALAI, CILL…LVGM, CGPV…YKAW, and FSIY…YLWV.

This sequence belongs to the UbiA prenyltransferase family. Protoheme IX farnesyltransferase subfamily.

The protein resides in the cell inner membrane. It carries out the reaction heme b + (2E,6E)-farnesyl diphosphate + H2O = Fe(II)-heme o + diphosphate. The protein operates within porphyrin-containing compound metabolism; heme O biosynthesis; heme O from protoheme: step 1/1. In terms of biological role, converts heme B (protoheme IX) to heme O by substitution of the vinyl group on carbon 2 of heme B porphyrin ring with a hydroxyethyl farnesyl side group. This Shewanella sediminis (strain HAW-EB3) protein is Protoheme IX farnesyltransferase.